Here is a 261-residue protein sequence, read N- to C-terminus: Triosephosphate isomerase (261 aa).

A substrate-binding site is contributed by 10 to 12 (NWK). Residue His100 is the Electrophile of the active site. Glu172 acts as the Proton acceptor in catalysis. Residues Gly178, Ser218, and 239-240 (GG) each bind substrate.

The protein belongs to the triosephosphate isomerase family. Homodimer.

Its subcellular location is the cytoplasm. It carries out the reaction D-glyceraldehyde 3-phosphate = dihydroxyacetone phosphate. Its pathway is carbohydrate biosynthesis; gluconeogenesis. The protein operates within carbohydrate degradation; glycolysis; D-glyceraldehyde 3-phosphate from glycerone phosphate: step 1/1. Its function is as follows. Involved in the gluconeogenesis. Catalyzes stereospecifically the conversion of dihydroxyacetone phosphate (DHAP) to D-glyceraldehyde-3-phosphate (G3P). This Rhodococcus jostii (strain RHA1) protein is Triosephosphate isomerase.